The chain runs to 241 residues: Small ribosomal subunit protein uS3 (241 aa).

Residues 39-108 (IREGVLKLLK…NLKVEVKVIE (70 aa)) form the KH type-2 domain. The segment at 215 to 241 (SQRVSEKAPMNNDRRFNNKNNNRGGRK) is disordered. The span at 232–241 (NKNNNRGGRK) shows a compositional bias: low complexity.

This sequence belongs to the universal ribosomal protein uS3 family. Part of the 30S ribosomal subunit. Forms a tight complex with proteins S10 and S14.

Functionally, binds the lower part of the 30S subunit head. Binds mRNA in the 70S ribosome, positioning it for translation. The protein is Small ribosomal subunit protein uS3 of Mesoplasma florum (Acholeplasma florum).